We begin with the raw amino-acid sequence, 220 residues long: Probable glutathione S-transferase parA (220 aa).

One can recognise a GST N-terminal domain in the interval 4 to 83 (NNVVLLDFWP…YIDEVWHDKC (80 aa)). Glutathione contacts are provided by residues Ser14, Lys41, Ile55, and 67–68 (ES). The region spanning 89–209 (DPYERSQARF…LPHPHKIYGF (121 aa)) is the GST C-terminal domain.

It belongs to the GST superfamily. HSP26 family.

It carries out the reaction RX + glutathione = an S-substituted glutathione + a halide anion + H(+). This is Probable glutathione S-transferase parA (PARA) from Nicotiana tabacum (Common tobacco).